The following is an 868-amino-acid chain: LPS-assembly protein LptD (868 aa).

Positions 1–24 are cleaved as a signal peptide; the sequence is MLKGIHKYLLMCFGTVLFTVQANA.

This sequence belongs to the LptD family. In terms of assembly, component of the lipopolysaccharide transport and assembly complex. Interacts with LptE and LptA.

Its subcellular location is the cell outer membrane. In terms of biological role, together with LptE, is involved in the assembly of lipopolysaccharide (LPS) at the surface of the outer membrane. This chain is LPS-assembly protein LptD, found in Francisella tularensis subsp. holarctica (strain LVS).